The chain runs to 89 residues: Large ribosomal subunit protein bL31B (89 aa).

This sequence belongs to the bacterial ribosomal protein bL31 family. Type B subfamily. As to quaternary structure, part of the 50S ribosomal subunit.

The sequence is that of Large ribosomal subunit protein bL31B from Corynebacterium urealyticum (strain ATCC 43042 / DSM 7109).